Here is a 202-residue protein sequence, read N- to C-terminus: Matrix protein (202 aa).

Residues 35–38 (PPEY) carry the PPXY motif motif. Positions 115–151 (KIRRTLVFQWAESRGPLDGEELEYSQEITWDDDSEFI) are essential for glycoprotein binding.

It belongs to the lyssavirus matrix protein family. As to quaternary structure, homomultimer. Interacts with nucleoprotein and with the cytoplasmic domain of glycoprotein.

The protein localises to the virion membrane. Its subcellular location is the host endomembrane system. Its function is as follows. Plays a major role in assembly and budding of virion. Completely covers the ribonucleoprotein coil and keep it in condensed bullet-shaped form. Inhibits viral transcription and stimulates replication. Plays a major role in early induction of TRAIL-mediated apoptosis in infected neurons. The chain is Matrix protein (M) from Aravan virus (ARAV).